The sequence spans 231 residues: 5'-methylthioadenosine/S-adenosylhomocysteine nucleosidase (231 aa).

Glu12 serves as the catalytic Proton acceptor. Residues Gly78, Met153, and 174–175 (ME) contribute to the substrate site. Asp198 serves as the catalytic Proton donor.

This sequence belongs to the PNP/UDP phosphorylase family. MtnN subfamily.

It catalyses the reaction S-adenosyl-L-homocysteine + H2O = S-(5-deoxy-D-ribos-5-yl)-L-homocysteine + adenine. The catalysed reaction is S-methyl-5'-thioadenosine + H2O = 5-(methylsulfanyl)-D-ribose + adenine. It carries out the reaction 5'-deoxyadenosine + H2O = 5-deoxy-D-ribose + adenine. Its pathway is amino-acid biosynthesis; L-methionine biosynthesis via salvage pathway; S-methyl-5-thio-alpha-D-ribose 1-phosphate from S-methyl-5'-thioadenosine (hydrolase route): step 1/2. Catalyzes the irreversible cleavage of the glycosidic bond in both 5'-methylthioadenosine (MTA) and S-adenosylhomocysteine (SAH/AdoHcy) to adenine and the corresponding thioribose, 5'-methylthioribose and S-ribosylhomocysteine, respectively. Also cleaves 5'-deoxyadenosine, a toxic by-product of radical S-adenosylmethionine (SAM) enzymes, into 5-deoxyribose and adenine. The protein is 5'-methylthioadenosine/S-adenosylhomocysteine nucleosidase of Bacillus velezensis (strain DSM 23117 / BGSC 10A6 / LMG 26770 / FZB42) (Bacillus amyloliquefaciens subsp. plantarum).